The chain runs to 452 residues: Transcription factor PERIANTHIA (452 aa).

Positions 164-227 constitute a bZIP domain; sequence DQRTLRRLAQ…RGVSADHTHL (64 aa). The basic motif stretch occupies residues 166-186; the sequence is RTLRRLAQNREAARKSRLRKK. Positions 192–206 are leucine-zipper; sequence LENSRIRLAQLEEEL. The DOG1 domain maps to 233–449; it reads VFSFELEYTR…RALSSLWLAR (217 aa).

Belongs to the bZIP family. In terms of assembly, interacts with GRXC7/ROXY1. Interacts with BOP1 and BOP2.

The protein resides in the nucleus. Transcriptional activator involved in the determination of floral organ number. Acts to determine floral organ patterning by establishing floral organ primordia in specific numbers and positions. Plays a role in regulating stem cell fate by directly controlling AG expression. Binds to the 5'-AAGAAT-3' cis-acting element found in AG promoter. Might represent a target for a post-translational modification by GRXC7/ROXY1. This chain is Transcription factor PERIANTHIA (PAN), found in Arabidopsis thaliana (Mouse-ear cress).